The sequence spans 638 residues: LEAF RUST 10 DISEASE-RESISTANCE LOCUS RECEPTOR-LIKE PROTEIN KINASE-like 2.1 (638 aa).

The signal sequence occupies residues 1–29 (MINLSLYQTNSLSYTIIWMLFVIPSCVLS). The Extracellular segment spans residues 30–264 (VDERQKHCSP…EHTCGKMGIG (235 aa)). N-linked (GlcNAc...) asparagine glycosylation is found at Asn69, Asn114, Asn136, Asn204, and Asn239. The chain crosses the membrane as a helical span at residues 265–285 (IGLGCGFLGATLITVCLLCFF). Over 286-638 (FQKRRTSHHL…YTEVFIGSTS (353 aa)) the chain is Cytoplasmic. The 289-residue stretch at 321-609 (KLFSHTLGKG…VLEVPPKPSI (289 aa)) folds into the Protein kinase domain. Residues 327–335 (LGKGGFGTV) and Lys349 each bind ATP. Phosphotyrosine is present on Tyr393. Asp444 functions as the Proton acceptor in the catalytic mechanism. Position 484 is a phosphothreonine (Thr484).

It belongs to the protein kinase superfamily. Ser/Thr protein kinase family.

The protein resides in the membrane. The catalysed reaction is L-seryl-[protein] + ATP = O-phospho-L-seryl-[protein] + ADP + H(+). It catalyses the reaction L-threonyl-[protein] + ATP = O-phospho-L-threonyl-[protein] + ADP + H(+). The protein is LEAF RUST 10 DISEASE-RESISTANCE LOCUS RECEPTOR-LIKE PROTEIN KINASE-like 2.1 of Arabidopsis thaliana (Mouse-ear cress).